Reading from the N-terminus, the 525-residue chain is Protein MGF 505-6R (525 aa).

ANK repeat units follow at residues 54-83 (SIND…NLHY), 129-158 (ACDF…LLNV), 261-291 (NIHR…APNT), and 324-351 (KKLV…NLVD).

The protein belongs to the asfivirus MGF 505 family.

Plays a role in virus cell tropism, and may be required for efficient virus replication in macrophages. The polypeptide is Protein MGF 505-6R (Ornithodoros (relapsing fever ticks)).